The primary structure comprises 444 residues: MSGTGALMTVHVGQCGNQLAQAFWKSMVDEHGINERGQTTHEDDMNDKKDLLFYQADDDHYVPRAVLVDLEPRVINGMMQSPNFSNLFNTDNIFMSDHGGGAGNNWASGYCQGQEVQEKIMDIIIREAENTNNLDGILFTHSVSGGTGSGTGSLLLERLREAFPKKVIQTYSVFANSDTSTDVVVHPYNWVLSMQRLIENPDHVVVLDNAALHRLAAGKFKTDTPTFDHINSLVARIMSTSTAPYRFNSAMCPSIRYLDLAPFPPMHFIQSAISPVVDPNENFTRKTSVADVTRFLLKPTSMMVSTASRVRPNDCMLSAYMFLQGQIEAHTIMTAEQNVDFAIRRPPFYMLKPLRMMHAPLSPYVRPQYKVSGLLLNNSTSVAPLFESLLSKYDKLRSKRAFIDKFEKIDNFSLDMMDDAMHIVQDLLDEYKAVVQKDYLTRGL.

144–150 serves as a coordination point for GTP; it reads SGGTGSG.

The protein belongs to the tubulin family.

Its subcellular location is the cytoplasm. It localises to the cytoskeleton. It is found in the microtubule organizing center. The protein localises to the centrosome. The protein resides in the cell junction. Its subcellular location is the hemidesmosome. It localises to the adherens junction. Tubulin is the major constituent of microtubules. The gamma chain is found at microtubule organizing centers (MTOC) such as the spindle poles or the centrosome, suggesting that it is involved in the minus-end nucleation of microtubule assembly. The protein is Tubulin gamma chain (tbg-1) of Caenorhabditis elegans.